A 210-amino-acid polypeptide reads, in one-letter code: Probable septum site-determining protein MinC (210 aa).

Belongs to the MinC family. In terms of assembly, interacts with MinD and FtsZ.

Functionally, cell division inhibitor that blocks the formation of polar Z ring septums. Rapidly oscillates between the poles of the cell to destabilize FtsZ filaments that have formed before they mature into polar Z rings. Prevents FtsZ polymerization. The polypeptide is Probable septum site-determining protein MinC (Clostridium novyi (strain NT)).